The primary structure comprises 557 residues: MDQSRVLLWVKAEPFIVGALQVPPPSKFSLHYLRKISTYVQIRATEGAYPRLYWSTWRHIACGKLQLAKDLAWLYFEIFDSLSMKTPEERLEWSEVLSNCMSEEEVEKQRNQLSVDTLQFLLFLYIQQLNKVSLRTSLIGEEWPSPRNKSQSPDLTEKSNCHNKNWNDYSHQAFVYDHLSDLLELLLDPKQLTASFHSTHSSLVSREAVVALSFLIEGTISRARKIYPLHELALWQPLHADSGFSKISKTFSFYKLETWLRSCLTGNPFGTSACLKSGKKLAWAHQVEGTTKRAKIACNTHVAPRMHRLVVMSQVYKQTLAKSSDTLAGAHVKIHRCNESFIYLLSPLRSVTIEKCRNSIFVLGPVGTTLHLHSCDNVKVIAVCHRLSISSTTGCIFHVLTPTRPLILSGNQTVTFAPFHTHYPMLEDHMARTGLATVPNYWDNPMVVCRENSDTRVFQLLPPCEFYVFIIPFEMEGDTTEIPGGLPSVYQKALGQREQKIQIWQKTVKEAHLTKDQRKQFQVLVENKFYEWLINTGHRQQLDSLVPPAAGSKQAAG.

The C-CAP/cofactor C-like domain maps to 290-435 (TTKRAKIACN…LEDHMARTGL (146 aa)).

Belongs to the TBCC family.

Its subcellular location is the cytoplasm. It is found in the cytoskeleton. It localises to the microtubule organizing center. The protein resides in the centrosome. The protein localises to the spindle pole. Plays a role in the regulation of centrosome and Golgi apparatus positioning, with consequences on cell shape and cell migration. The sequence is that of TBCC domain-containing protein 1 (TBCCD1) from Homo sapiens (Human).